Reading from the N-terminus, the 351-residue chain is Phenylacetaldoxime dehydratase (351 aa).

Belongs to the heme-containing dehydratase family. As to quaternary structure, monomer. Heme b serves as cofactor.

The catalysed reaction is (Z)-phenylacetaldehyde oxime = phenylacetonitrile + H2O. In terms of biological role, catalyzes the stoichiometric dehydration of Z-phenylacetaldoxime to phenylacetonitrile. Prefers the Z-form of phenylacetaldoxime over its E-isomer. This chain is Phenylacetaldoxime dehydratase, found in Bacillus sp. (strain OxB-1).